The sequence spans 90 residues: Small ribosomal subunit protein uS15 (90 aa).

This sequence belongs to the universal ribosomal protein uS15 family. In terms of assembly, part of the 30S ribosomal subunit. Forms a bridge to the 50S subunit in the 70S ribosome, contacting the 23S rRNA.

Its function is as follows. One of the primary rRNA binding proteins, it binds directly to 16S rRNA where it helps nucleate assembly of the platform of the 30S subunit by binding and bridging several RNA helices of the 16S rRNA. In terms of biological role, forms an intersubunit bridge (bridge B4) with the 23S rRNA of the 50S subunit in the ribosome. The chain is Small ribosomal subunit protein uS15 from Aliarcobacter butzleri (strain RM4018) (Arcobacter butzleri).